The primary structure comprises 227 residues: Monoamine regulon transcriptional regulator (227 aa).

The region spanning 155 to 220 (EDDLPAILTA…ELVSRTWMPA (66 aa)) is the HTH luxR-type domain. The segment at residues 179–198 (NKLIARQLDISLSTVKTHLR) is a DNA-binding region (H-T-H motif).

Positive regulatory protein for the induction of arylsulfatase synthesis (maoA), tyramine oxidase (tynA), maoC, maoE/F operon, and atsB/A operon which are all regulated by monoamines, and included under the common term of monoamine regulon. The chain is Monoamine regulon transcriptional regulator (moaR) from Klebsiella aerogenes (Enterobacter aerogenes).